We begin with the raw amino-acid sequence, 63 residues long: 2-hydroxymuconate tautomerase (63 aa).

The active-site Proton acceptor; via imino nitrogen is proline 2.

The protein belongs to the 4-oxalocrotonate tautomerase family. Homohexamer.

The catalysed reaction is (2Z,4E)-2-hydroxyhexa-2,4-dienedioate = (3E)-2-oxohex-3-enedioate. It functions in the pathway xenobiotic degradation; toluene degradation. Its function is as follows. Catalyzes the ketonization of 2-hydroxymuconate stereoselectively to yield 2-oxo-3-hexenedioate. This chain is 2-hydroxymuconate tautomerase (dmpI), found in Pseudomonas sp. (strain CF600).